A 1451-amino-acid polypeptide reads, in one-letter code: DNA polymerase III PolC-type (1451 aa).

The Exonuclease domain maps to 416 to 575; sequence FVIFDIETTG…YDTEALKKVF (160 aa).

It belongs to the DNA polymerase type-C family. PolC subfamily.

The protein resides in the cytoplasm. The enzyme catalyses DNA(n) + a 2'-deoxyribonucleoside 5'-triphosphate = DNA(n+1) + diphosphate. Required for replicative DNA synthesis. This DNA polymerase also exhibits 3' to 5' exonuclease activity. The chain is DNA polymerase III PolC-type from Mycoplasma genitalium (strain ATCC 33530 / DSM 19775 / NCTC 10195 / G37) (Mycoplasmoides genitalium).